A 622-amino-acid chain; its full sequence is Membrane protein insertase YidC (622 aa).

The helical transmembrane segment at 8-28 (LFLALILSMGIWMGVNYFFFP) threads the bilayer. Over residues 33 to 61 (KTSETKEVKVDKPSDDKQDQIQKEKKESR) the composition is skewed to basic and acidic residues. The interval 33-70 (KTSETKEVKVDKPSDDKQDQIQKEKKESRTTIPSKGTK) is disordered. Helical transmembrane passes span 413 to 433 (FTIP…KLVF), 484 to 504 (VGGC…YTAF), 532 to 552 (AIPY…LMVG), and 571 to 591 (MLMY…PSGV).

This sequence belongs to the OXA1/ALB3/YidC family. Type 1 subfamily. As to quaternary structure, interacts with the Sec translocase complex via SecD. Specifically interacts with transmembrane segments of nascent integral membrane proteins during membrane integration.

The protein localises to the cell inner membrane. Required for the insertion and/or proper folding and/or complex formation of integral membrane proteins into the membrane. Involved in integration of membrane proteins that insert both dependently and independently of the Sec translocase complex, as well as at least some lipoproteins. Aids folding of multispanning membrane proteins. The protein is Membrane protein insertase YidC of Leptospira borgpetersenii serovar Hardjo-bovis (strain JB197).